We begin with the raw amino-acid sequence, 695 residues long: Translation initiation factor IF-2 (695 aa).

The interval 60–92 (KKSASSKKKTEKEVEEEEIETPKKKKKQEEKIP) is disordered. The region spanning 184 to 358 (QRPPVVTVMG…EMSEIKCIPT (175 aa)) is the tr-type G domain. Residues 193–200 (GHVDHGKT) are G1. 193 to 200 (GHVDHGKT) lines the GTP pocket. A G2 region spans residues 218-222 (GITQS). Positions 239–242 (DTPG) are G3. Residues 239-243 (DTPGH) and 293-296 (NKID) contribute to the GTP site. The G4 stretch occupies residues 293–296 (NKID). The segment at 330–332 (SAK) is G5.

This sequence belongs to the TRAFAC class translation factor GTPase superfamily. Classic translation factor GTPase family. IF-2 subfamily.

Its subcellular location is the cytoplasm. Its function is as follows. One of the essential components for the initiation of protein synthesis. Protects formylmethionyl-tRNA from spontaneous hydrolysis and promotes its binding to the 30S ribosomal subunits. Also involved in the hydrolysis of GTP during the formation of the 70S ribosomal complex. This chain is Translation initiation factor IF-2, found in Kosmotoga olearia (strain ATCC BAA-1733 / DSM 21960 / TBF 19.5.1).